An 825-amino-acid polypeptide reads, in one-letter code: Heterogeneous nuclear ribonucleoprotein U (825 aa).

Ser-2 is modified (N-acetylserine; partial). Ser-4 carries the phosphoserine modification. Residues 8 to 42 (VKKLKVSELKEELKKRRLSDKGLKAELMERLQAAL) enclose the SAP domain. Residues Lys-17 and Lys-21 each carry the N6-acetyllysine modification. Residues 41–281 (ALDDEEAGGR…PQPPVEEEDE (241 aa)) are disordered. Position 59 is a phosphoserine; by PLK1 (Ser-59). Phosphoserine is present on Ser-66. Low complexity predominate over residues 72 to 81 (AGLEQEAAAG). 3 stretches are compositionally biased toward acidic residues: residues 82–95 (GDEEEEEEEEEEEG), 120–134 (PMEEEEAASEDENGD), and 140–153 (EGEDELGDEEEGAG). Positions 159-178 (GEQQPQPPATQQQQPQQQRG) are enriched in low complexity. At Lys-186 the chain carries N6-acetyllysine. Residue Ser-187 is modified to ADP-ribosylserine. The span at 199–211 (APPGARQGQQQAG) shows a compositional bias: low complexity. Residue Lys-215 is modified to N6-acetyllysine. The segment covering 233–266 (GKTEQKGGDKKRGVKRPREDHGRGYFEYIEENKY) has biased composition (basic and acidic residues). Residue Arg-255 is modified to Citrulline. An N6-acetyllysine; alternate modification is found at Lys-265. A Glycyl lysine isopeptide (Lys-Gly) (interchain with G-Cter in SUMO1); alternate cross-link involves residue Lys-265. Residue Lys-265 forms a Glycyl lysine isopeptide (Lys-Gly) (interchain with G-Cter in SUMO2); alternate linkage. Tyr-266 carries the post-translational modification Phosphotyrosine. Ser-267 and Ser-271 each carry phosphoserine. One can recognise a B30.2/SPRY domain in the interval 267-464 (SRAKSPQPPV…VEFNFGQKEK (198 aa)). Phosphothreonine is present on Thr-286. Lys-352 is subject to N6-acetyllysine. Residues 488-672 (PKGPEEKKDC…QKLLEQYKEE (185 aa)) form an ATPase domain region. Lys-495 is covalently cross-linked (Glycyl lysine isopeptide (Lys-Gly) (interchain with G-Cter in SUMO2)). 504–511 (GLPGAGKT) is a binding site for ATP. N6-acetyllysine; alternate occurs at positions 516 and 524. Glycyl lysine isopeptide (Lys-Gly) (interchain with G-Cter in SUMO2); alternate cross-links involve residues Lys-516 and Lys-524. Residue Thr-532 is modified to Phosphothreonine. Residue Lys-536 forms a Glycyl lysine isopeptide (Lys-Gly) (interchain with G-Cter in SUMO2) linkage. Lys-551 carries the post-translational modification N6-acetyllysine. Residue Lys-565 is modified to N6-acetyllysine; alternate. Lys-565 participates in a covalent cross-link: Glycyl lysine isopeptide (Lys-Gly) (interchain with G-Cter in SUMO2); alternate. Lys-574 is covalently cross-linked (Glycyl lysine isopeptide (Lys-Gly) (interchain with G-Cter in SUMO2)). Thr-582 is modified (phosphothreonine). Glycyl lysine isopeptide (Lys-Gly) (interchain with G-Cter in SUMO2) cross-links involve residues Lys-609 and Lys-626. An actin-binding region spans residues 611 to 626 (EDYKQRTQKKAEVEGK). Lys-635 carries the post-translational modification N6-acetyllysine; alternate. A Glycyl lysine isopeptide (Lys-Gly) (interchain with G-Cter in SUMO2); alternate cross-link involves residue Lys-635. Residues Lys-664 and Lys-670 each participate in a glycyl lysine isopeptide (Lys-Gly) (interchain with G-Cter in SUMO2) cross-link. Residues 671–683 (EESKKALPPEKKQ) are compositionally biased toward basic and acidic residues. Residues 671–749 (EESKKALPPE…GGGGGGSGGI (79 aa)) form a disordered region. Position 702 is an omega-N-methylarginine (Arg-702). The span at 710 to 728 (GGFNMRGGNFRGGAPGNRG) shows a compositional bias: gly residues. Residues 714-739 (MRGGNFRGGAPGNRGGYNRRGNMPQR) are RNA-binding RGG-box. Arg-715, Arg-720, and Arg-727 each carry asymmetric dimethylarginine. Residues Arg-733 and Arg-739 each carry the asymmetric dimethylarginine; alternate modification. Residues Arg-733 and Arg-739 each carry the omega-N-methylarginine; alternate modification. The residue at position 739 (Arg-739) is a Dimethylated arginine; in A2780 ovarian carcinoma cell line. Residues 739 to 749 (RGGGGGGSGGI) show a composition bias toward gly residues. Asymmetric dimethylarginine occurs at positions 755 and 762. Positions 769 to 799 (GNYNRGGMPNRGNYNQNFRGRGNNRGYKNQS) are disordered. Low complexity predominate over residues 778–799 (NRGNYNQNFRGRGNNRGYKNQS). Lys-814 carries the N6-acetyllysine; alternate modification. Lys-814 is covalently cross-linked (Glycyl lysine isopeptide (Lys-Gly) (interchain with G-Cter in SUMO2); alternate).

In terms of assembly, oligomer (via ATPase domain and RNA-binding RGG-box region); oligomerization occurs upon ATP-binding in a chromatin-associated RNAs (caRNAs)- and transcription-dependent manner and is required for chromatin decompaction. ATP hydrolysis is required to cycle from an oligomeric to monomeric state to compact chromatin. Component of the coding region determinant (CRD)-mediated complex, composed of DHX9, HNRNPU, IGF2BP1, SYNCRIP and YBX1. Identified in the spliceosome C complex. Identified in a IGF2BP1-dependent mRNP granule complex containing untranslated mRNAs. Associates with heterogeneous nuclear ribonucleoprotein (hnRNP) particles. Associates (via middle region) with the C-terminal domain (CTD) RNA polymerase II (Pol II) holoenzyme; this association occurs in a RNA-independent manner. Associates (via middle region) with the core-TFIIH basal transcription factor complex; this association inhibits the CTD phosphorylation of RNA polymerase II holoenzyme by down-regulating TFIIH kinase activity. Associates with the telomerase holoenzyme complex. Associates with spindle microtubules (MTs) in a TPX2-dependent manner. Interacts (via C-terminus) with actin; this interaction is direct and mediates association with the phosphorylated CTD of RNA polymerase II and is disrupted in presence of the long non-coding H19 RNA. Interacts with AURKA. Interacts (via C-terminus) with CBX5; this interaction is, at least in part, RNA-dependent. Interacts with CR2. Interacts with CRY1. Interacts (via C-terminus) with EP300; this interaction enhances DNA-binding to nuclear scaffold/matrix attachment region (S/MAR) elements. Interacts with ERBB4. Interacts with GEMIN5. Interacts with IGF2BP1. Interacts with IGF2BP2 and IGF2BP3. Interacts with NCL; this interaction occurs during mitosis. Interacts (via C-terminus) with NR3C1 (via C-terminus). Interacts with PLK1; this interaction induces phosphorylation of HNRNPU at Ser-59 in mitosis. Interacts with POU3F4. Interacts with SMARCA4; this interaction occurs in embryonic stem cells and stimulates global Pol II-mediated transcription. Interacts (via C-terminus) with TOP2A; this interaction protects the topoisomerase TOP2A from degradation and positively regulates the relaxation of supercoiled DNA by TOP2A in a RNA-dependent manner. Interacts with TPX2; this interaction recruits HNRNPU to spindle microtubules (MTs). Interacts with UBQLN2. Interacts (via RNA-binding RGG-box region) with ZBTB7B; the interaction facilitates the recruitment of long non-coding RNA Blnc1 by ZBTB7B. Interacts with ERCC6. (Microbial infection) Interacts with HIV-1 protein Rev. Cleaved at Asp-100 by CASP3 during T-cell apoptosis, resulting in a loss of DNA- and chromatin-binding activities. Post-translationally, extensively phosphorylated. Phosphorylated on Ser-59 by PLK1 and dephosphorylated by protein phosphatase 2A (PP2A) in mitosis. In terms of processing, arg-739 is dimethylated, probably to asymmetric dimethylarginine. Arg-733 is dimethylated, probably to asymmetric dimethylarginine. Citrullinated by PADI4. In terms of tissue distribution, widely expressed.

It is found in the nucleus. The protein localises to the nucleus matrix. The protein resides in the chromosome. Its subcellular location is the nucleus speckle. It localises to the cytoplasm. It is found in the cytoskeleton. The protein localises to the microtubule organizing center. The protein resides in the centrosome. Its subcellular location is the centromere. It localises to the kinetochore. It is found in the spindle. The protein localises to the spindle pole. The protein resides in the midbody. Its subcellular location is the cell surface. It localises to the cytoplasmic granule. Its function is as follows. DNA- and RNA-binding protein involved in several cellular processes such as nuclear chromatin organization, telomere-length regulation, transcription, mRNA alternative splicing and stability, Xist-mediated transcriptional silencing and mitotic cell progression. Plays a role in the regulation of interphase large-scale gene-rich chromatin organization through chromatin-associated RNAs (caRNAs) in a transcription-dependent manner, and thereby maintains genomic stability. Required for the localization of the long non-coding Xist RNA on the inactive chromosome X (Xi) and the subsequent initiation and maintenance of X-linked transcriptional gene silencing during X-inactivation. Plays a role as a RNA polymerase II (Pol II) holoenzyme transcription regulator. Promotes transcription initiation by direct association with the core-TFIIH basal transcription factor complex for the assembly of a functional pre-initiation complex with Pol II in a actin-dependent manner. Blocks Pol II transcription elongation activity by inhibiting the C-terminal domain (CTD) phosphorylation of Pol II and dissociates from Pol II pre-initiation complex prior to productive transcription elongation. Positively regulates CBX5-induced transcriptional gene silencing and retention of CBX5 in the nucleus. Negatively regulates glucocorticoid-mediated transcriptional activation. Key regulator of transcription initiation and elongation in embryonic stem cells upon leukemia inhibitory factor (LIF) signaling. Involved in the long non-coding RNA H19-mediated Pol II transcriptional repression. Participates in the circadian regulation of the core clock component BMAL1 transcription. Plays a role in the regulation of telomere length. Plays a role as a global pre-mRNA alternative splicing modulator by regulating U2 small nuclear ribonucleoprotein (snRNP) biogenesis. Plays a role in mRNA stability. Component of the CRD-mediated complex that promotes MYC mRNA stabilization. Enhances the expression of specific genes, such as tumor necrosis factor TNFA, by regulating mRNA stability, possibly through binding to the 3'-untranslated region (UTR). Plays a role in mitotic cell cycle regulation. Involved in the formation of stable mitotic spindle microtubules (MTs) attachment to kinetochore, spindle organization and chromosome congression. Phosphorylation at Ser-59 by PLK1 is required for chromosome alignement and segregation and progression through mitosis. Also contributes to the targeting of AURKA to mitotic spindle MTs. Binds to double- and single-stranded DNA and RNA, poly(A), poly(C) and poly(G) oligoribonucleotides. Binds to chromatin-associated RNAs (caRNAs). Associates with chromatin to scaffold/matrix attachment region (S/MAR) elements in a chromatin-associated RNAs (caRNAs)-dependent manner. Binds to the Xist RNA. Binds the long non-coding H19 RNA. Binds to SMN1/2 pre-mRNAs at G/U-rich regions. Binds to small nuclear RNAs (snRNAs). Binds to the 3'-UTR of TNFA mRNA. Binds (via RNA-binding RGG-box region) to the long non-coding Xist RNA; this binding is direct and bridges the Xist RNA and the inactive chromosome X (Xi). Also negatively regulates embryonic stem cell differentiation upon LIF signaling. Required for embryonic development. Binds to brown fat long non-coding RNA 1 (Blnc1); facilitates the recruitment of Blnc1 by ZBTB7B required to drive brown and beige fat development and thermogenesis. In terms of biological role, (Microbial infection) Negatively regulates immunodeficiency virus type 1 (HIV-1) replication by preventing the accumulation of viral mRNA transcripts in the cytoplasm. The polypeptide is Heterogeneous nuclear ribonucleoprotein U (Homo sapiens (Human)).